The chain runs to 102 residues: NADH-quinone oxidoreductase subunit K (102 aa).

Helical transmembrane passes span 5–25 (IAHY…GIFL), 31–51 (IVIL…FVAF), and 66–86 (FVLT…VVFF).

This sequence belongs to the complex I subunit 4L family. NDH-1 is composed of 14 different subunits. Subunits NuoA, H, J, K, L, M, N constitute the membrane sector of the complex.

The protein resides in the cell inner membrane. It carries out the reaction a quinone + NADH + 5 H(+)(in) = a quinol + NAD(+) + 4 H(+)(out). Its function is as follows. NDH-1 shuttles electrons from NADH, via FMN and iron-sulfur (Fe-S) centers, to quinones in the respiratory chain. The immediate electron acceptor for the enzyme in this species is believed to be ubiquinone. Couples the redox reaction to proton translocation (for every two electrons transferred, four hydrogen ions are translocated across the cytoplasmic membrane), and thus conserves the redox energy in a proton gradient. This chain is NADH-quinone oxidoreductase subunit K, found in Brucella abortus (strain S19).